The following is a 101-amino-acid chain: Cilia- and flagella-associated protein 141 (101 aa).

In terms of assembly, microtubule inner protein component of sperm flagellar doublet microtubules. In terms of tissue distribution, expressed in trachea multiciliated cells.

It localises to the cytoplasm. The protein resides in the cytoskeleton. It is found in the cilium axoneme. Its subcellular location is the flagellum axoneme. In terms of biological role, microtubule inner protein (MIP) part of the dynein-decorated doublet microtubules (DMTs) in cilia axoneme, which is required for motile cilia beating. In Bos taurus (Bovine), this protein is Cilia- and flagella-associated protein 141.